We begin with the raw amino-acid sequence, 1898 residues long: MNWDTLKGVLKTRRLTKRTIPAYIHPTSRSDSTSSTQSATAGFILNEEPITLFRLELERLQYILHFPEEVAFQLSSTEYQLFYSIQPMDYVRYVSCDLTSVPVSENPSPVRNLVKRLSEVSSWITHVIVSQPTHDDRKVALTAILRIVETCWNIGNFNAAVEVLMGLKSEKLRPFWLSLRQEEKSQFDSLCETLLPANQALPSQAYINAVQRALRMPQSRVIPFFGIFLRDLYAIVNDLPNIVVIGQEGETQKLEFMSDPNGEDHFSSRIGVGGLLNADKINLVAIVLDNLELFHRHSRTMIKLLEEQAVPPIQIPQNEREQKEKEAKTYEPVQVVRGSSHGVALIPLDTLTFDLDVIQRLQHGTTVIHYEPDSGRSNLCLLRLDPSCGQINWHKISYSVNKDPKEKDVLAKVSVSNLQPLDSGRGAPSPMPSGRTPGTGGVGVEEGELKLSVVKGVELVDSYDIDIEAIYRRHSMEEMSVPVSCWKVSHGQLLSDNEFIYFLAPQQIAQFWTNGLQSVVKSLQGQQRYPDRRMLWIKNVYLSLYEITGESNCGPRPFEALQAFGLSQTNTNATRPNDSSLSSEPGGAKSRLKNLKNAMQKKLRGASREGSRSQSPQPHSPLVRPPSIKSQISSQSGPPGPNSPGYLLKPRGEPANSDAGDIDSIYTPRSRTPTSSSYGGRSVGGRSCKSWRSRGGETPNSGSISSSGQMSIQVSGLSGPSGKEFQEKPLTLVEFAELFRLFNTRMRKDLRDVFNDVLSTATTPQHCPKRERDRHSPRMQSRLASVSNSYNADFLSNDFLTRNTAVTSHHISEKQNKIYNALALASVNSMGGLMDTSRSSMLTPQMLRAFVNTHQMEQIDEQTAIKLIQDHEPDGICRQKNQMSFEGFTRFLCDPVNFAFVPETIEPDEEDLRYPLSHYYINSSHNTYLTGHQLKGPSSSEMYRQVLLTGCRCVELDCWDGDDGLPLIYHGHTLVSKIGFRQVVEIIKKSAFITSDLPVILSIENHCSLQQQAKMAQMFKTVLGDLLVSNFLFEADFSDSPRLPCPLQMKNKILIKNKKMIVDPPTPLPMIERGAVQRGETQLNLHRKQSKNSYESSTVDEVEDDDLDEFLDDEENEEDDQEEVQVRSEKEDSPKTSKRAEKSARNIKQQDSLCSDHSVEQAKPSTSKTTSKTNDRKTEDEVLYAQLAQNAIRNQQPRKNNTGVQIAPELSDIVIYMQATKFKGFPPVDGIQSPRIMEEGPASASLSFSSRARTPSNLLNTPAPPRRQRSSTQLSQELAAEFLGSVRANATATCYQVTSLNENAAKKLMKRHPAKCVSYTRDHLIRTYPSAKHYDSSNFNPINCWAHGMQMVALNFQTPDVIMAVNQAMFEQSGNCGYQLKPRCLWDESHLLYNKFLPLSKDIAGHSALLLNLTIISGQHVYPNTHYASLYVEIEVIGIHNDCVREKSKVVQRNSVNPIWNHTTQLRIACVDLAFLRIAVCDSGQNGRVVAHRVVPVKCIRPGFRHLPLRTPTNLPIDNAMIFLRTRFEQEEHIYLHDDDSNTYCNLEHTLAYRTDLTPNLSPTPILKKQIFVLRITGAFADETAITVHSESGSTVKTVMQQALLNAGKNADQVEEYVLIEESLPAPSGEDPIEQRVLPLNEPIMDAVACWNGSMRRFVLRKKGSDPSSRAWITSIIKSGTSGSSTSVSPSPLTKDGHVKSASSNQLHGRSLDTDAFGEHLEVTEGKWLNPRARSMGDTFLVCVHNVSEDQPYAILRAGIHSTAADIIRQVFVKARRSNVDDSEFVLVEETCDDPKLNQGQSMLQALSLARKRSNDLTPKYPNNRTTSRVLGQNENVWKAQSRWKSMGRFVLENRKDTVHATLEKEFHEMAKIIREGIPKKDETYYMIYYSGLPGEDI.

One can recognise a Ras-GEF domain in the interval 66–328 (FPEEVAFQLS…EREQKEKEAK (263 aa)). Disordered stretches follow at residues 419-444 (QPLD…GVGV) and 569-722 (TNTN…GPSG). Over residues 569–583 (TNTNATRPNDSSLSS) the composition is skewed to polar residues. The segment covering 590 to 605 (SRLKNLKNAMQKKLRG) has biased composition (basic residues). Low complexity-rich tracts occupy residues 625–637 (PPSI…SQSG), 666–687 (YTPR…GGRS), and 701–716 (SGSI…QVSG). A PI-PLC X-box domain is found at 910 to 1058 (EDLRYPLSHY…MKNKILIKNK (149 aa)). Active-site residues include H925 and H970. Disordered stretches follow at residues 1082–1178 (QLNL…DRKT) and 1238–1274 (EEGP…STQL). The segment covering 1098–1123 (TVDEVEDDDLDEFLDDEENEEDDQEE) has biased composition (acidic residues). The span at 1124–1144 (VQVRSEKEDSPKTSKRAEKSA) shows a compositional bias: basic and acidic residues. The span at 1146–1155 (NIKQQDSLCS) shows a compositional bias: polar residues. Low complexity-rich tracts occupy residues 1163–1172 (KPSTSKTTSK) and 1242–1253 (ASASLSFSSRAR). One can recognise a PI-PLC Y-box domain in the interval 1279–1385 (AAEFLGSVRA…CGYQLKPRCL (107 aa)). Residues 1391-1517 (LLYNKFLPLS…PLRTPTNLPI (127 aa)) enclose the C2 domain. One can recognise a Ras-associating 1 domain in the interval 1570–1665 (QIFVLRITGA…RRFVLRKKGS (96 aa)). Positions 1680 to 1694 (GTSGSSTSVSPSPLT) are enriched in low complexity. Positions 1680 to 1711 (GTSGSSTSVSPSPLTKDGHVKSASSNQLHGRS) are disordered. Residues 1738–1857 (DTFLVCVHNV…GRFVLENRKD (120 aa)) enclose the Ras-associating 2 domain.

In terms of assembly, interacts (via Ras-associating domain 1) with let-60 (in GTP-bound form). The cofactor is Ca(2+). As to expression, expressed in the spermatheca, vulva, intestine and excretory cells. Expressed in sensory neurons AWC, AFD, ASE, ASG and BAG, interneurons, ventral nerve cord neurons and tail neurons. Expressed in body muscles.

The catalysed reaction is a 1,2-diacyl-sn-glycero-3-phospho-(1D-myo-inositol-4,5-bisphosphate) + H2O = 1D-myo-inositol 1,4,5-trisphosphate + a 1,2-diacyl-sn-glycerol + H(+). In terms of biological role, the production of the second messenger molecules diacylglycerol (DAG) and inositol 1,4,5-trisphosphate (IP3) is mediated by activated phosphatidylinositol-specific phospholipase C enzymes. plc-1 is a bifunctional enzyme which also regulates small GTPases of the Ras superfamily through its Ras guanine-exchange factor (RasGEF) activity. By activating IP3 receptor itr-1-mediated intracellular Ca(2+) release via the production of IP3, regulates ovulation by controlling contraction and/or dilation of the distal spermatheca valve during oocyte entry and the timing of the dilation of the spermatheca-uterine valve during oocyte exit. In a similar manner, plays an essential role in epidermal morphogenesis by regulating migration of epidermal cells during ventral closure and to a lesser extent by regulating epidermal cell dorsal intercalation. Involved in the immune response to S.aureus bacterium by activating kinase dkf-1 via the production of DAG which in turn activates transcription factor hlh-30. In ASER neurons, required for adjusting the orientation behavior in salt gradients based on the memory of previous salt concentration encountered. This Caenorhabditis elegans protein is 1-phosphatidylinositol 4,5-bisphosphate phosphodiesterase epsilon-1.